We begin with the raw amino-acid sequence, 246 residues long: Ubiquinone biosynthesis O-methyltransferase (246 aa).

S-adenosyl-L-methionine contacts are provided by Arg44, Gly63, Asp84, and Met128.

It belongs to the methyltransferase superfamily. UbiG/COQ3 family.

The catalysed reaction is a 3-demethylubiquinol + S-adenosyl-L-methionine = a ubiquinol + S-adenosyl-L-homocysteine + H(+). It catalyses the reaction a 3-(all-trans-polyprenyl)benzene-1,2-diol + S-adenosyl-L-methionine = a 2-methoxy-6-(all-trans-polyprenyl)phenol + S-adenosyl-L-homocysteine + H(+). Its pathway is cofactor biosynthesis; ubiquinone biosynthesis. Its function is as follows. O-methyltransferase that catalyzes the 2 O-methylation steps in the ubiquinone biosynthetic pathway. This is Ubiquinone biosynthesis O-methyltransferase from Xylella fastidiosa (strain Temecula1 / ATCC 700964).